A 234-amino-acid polypeptide reads, in one-letter code: MTQQLNVDPAEIKKFEDMASRWWDLEGEFKPLHQINPLRLNYVLENANGLFGKKVLDVGCGGGILAESMAKQGADVVGLDMGKEPLTVARLHALETGTKLEYVQSTAEQHAEENPETYDVVTCMEMLEHVPDPLSVIRSCAKMVKPGGHVFFSTLNRNIKSYLFAIVGAEQLLKLVPKGTHDHNKFIRPSELLKMLDQTALQERGITGLHYNPLTDTYSLGKNVDVNYIVHTTL.

S-adenosyl-L-methionine is bound by residues Arg-39, Gly-59, Asp-80, and Met-124.

This sequence belongs to the methyltransferase superfamily. UbiG/COQ3 family.

It carries out the reaction a 3-demethylubiquinol + S-adenosyl-L-methionine = a ubiquinol + S-adenosyl-L-homocysteine + H(+). The catalysed reaction is a 3-(all-trans-polyprenyl)benzene-1,2-diol + S-adenosyl-L-methionine = a 2-methoxy-6-(all-trans-polyprenyl)phenol + S-adenosyl-L-homocysteine + H(+). It functions in the pathway cofactor biosynthesis; ubiquinone biosynthesis. O-methyltransferase that catalyzes the 2 O-methylation steps in the ubiquinone biosynthetic pathway. The protein is Ubiquinone biosynthesis O-methyltransferase of Aliivibrio fischeri (strain MJ11) (Vibrio fischeri).